Here is a 677-residue protein sequence, read N- to C-terminus: Protein windpipe (677 aa).

Positions 1–20 are cleaved as a signal peptide; it reads MERVHLTAWLALFLIVVANA. The Extracellular segment spans residues 21 to 451; it reads TPTPARTPTG…IGKPKDDSSA (431 aa). Asn-53 and Asn-80 each carry an N-linked (GlcNAc...) asparagine glycan. LRR repeat units lie at residues 91–116, 118–133, 134–156, and 158–183; these read LPELTSADLSHNQLKDLGHLGKGLKR, NLKHNQLTSDKLRKLP, QHLQVLNLQHNNITHLPLELTHM, and QLHQLELSHNAINCSCQTLEVRNWLV. Residues Asn-145 and Asn-170 are each glycosylated (N-linked (GlcNAc...) asparagine). One can recognise an LRRCT domain in the interval 184–216; sequence ERIVYMEHPVVCSYPLEFRGRSWLQLKQDEICK. Disordered stretches follow at residues 264-285, 298-317, and 325-385; these read AKKVRSPQIPLPSDQVEGSGDL, TVAEPEAAESQLVDAAASPS, and KDED…TVFS. The span at 347-372 shows a compositional bias: basic and acidic residues; it reads SKVKITSEDDIDSDGKPEESDVRPLE. The segment covering 374–385 has biased composition (polar residues); it reads PENSENPDTVFS. Residues 452-472 form a helical membrane-spanning segment; sequence IYYLLAVIGLIVVGLVLFVAI. Over 473 to 677 the chain is Cytoplasmic; it reads KRCKYDSNAA…EPTHQVINGH (205 aa). 2 disordered regions span residues 502–523 and 539–677; these read LGKPLHKNGHGNGQEHSPLIGE and NGEA…INGH. The segment covering 595–607 has biased composition (low complexity); it reads AQQQQLAEQNNNE.

In terms of assembly, interacts with dome; the interaction promotes internalization of dome and its subsequent lysosomal degradation. In adult intestine, expressed in both small progenitor cells and large nuclei enterocytes (at protein level). During embryogenesis, restricted to the developing trachea.

It localises to the cell membrane. Its function is as follows. Plays a role in negative regulation of the JAK/STAT pathway by binding to the receptor dome and promoting its internalization for subsequent lysosomal degradation, thereby reducing JAK/STAT signaling. The protein is Protein windpipe of Drosophila melanogaster (Fruit fly).